A 462-amino-acid polypeptide reads, in one-letter code: BBSome complex member bbs-4 (462 aa).

Residues 1-46 (MEASNQDEIIGTDVIPNEQDNPEEVVPEPTSLDVPPPPPERAPSAP) are disordered. 7 TPR repeats span residues 89 to 122 (EAAF…SGKN), 124 to 156 (RYFY…MKDN), 199 to 232 (ATLI…QPDN), 234 to 266 (EVMN…DPAN), 268 to 300 (QAIL…SDYN), 335 to 368 (YKIS…YPQN), and 369 to 402 (AKAV…KKNP).

Belongs to the BBS4 family. In terms of assembly, part of BBSome complex, that contains at least bbs-1, bbs-2, bbs-4, bbs-5, osm-12, bbs-8/ttc-8 and bbs-9. Interacts (via C-terminus) with bbs-5; the interaction is direct.

The protein resides in the cytoplasm. Its subcellular location is the cytoskeleton. It localises to the microtubule organizing center. It is found in the centrosome. The protein localises to the cell projection. The protein resides in the cilium membrane. Its function is as follows. Component of the BBSome complex. The BBSome complex is thought to function as a coat complex required for sorting of specific membrane proteins to the primary cilia. The BBSome complex is required for ciliogenesis but is dispensable for centriolar satellite function. Required for proper BBSome complex assembly and its ciliary localization. May be required for microtubule anchoring at the centrosome but not for microtubule nucleation. May be required for the dynein-mediated transport of pericentriolar proteins to the centrosome. Required, redundantly with bbs-5, for cilia biogenesis and both the assembly and movement of intraflagellar transport proteins along the ciliary axoneme. Plays a role in the removal of degraded mechanosensory receptors within the cilia. This Caenorhabditis elegans protein is BBSome complex member bbs-4.